We begin with the raw amino-acid sequence, 211 residues long: MASGFLLCPVLLAVFFMSPVEVGAFPLYSLFTNAVIRAQHLHQLAADIYKDFERTYVPEEQRQSSKSSPSAICYSESIPAPTGKDEAQQRSDVELLRFSLALIQSWISPLQTLSRVFSNSLVFGTSDRIFEKLQDLERGIVTLTREIDEGSPRIAAFLTLTYEKFDTNLRNDDALMKNYGLLACFKKDMHKVETYLKVMKCRRFVESNCTL.

Positions 1–23 (MASGFLLCPVLLAVFFMSPVEVG) are cleaved as a signal peptide. Residue His-40 coordinates Zn(2+). An intrachain disulfide couples Cys-73 to Cys-184. Glu-193 lines the Zn(2+) pocket. Cys-201 and Cys-209 are joined by a disulfide.

The protein belongs to the somatotropin/prolactin family.

The protein resides in the secreted. Growth hormone plays an important role in growth control and is involved in the regulation of several anabolic processes. Implicated as an osmoregulatory substance important for seawater adaptation. In Lepisosteus osseus (Long-nosed gar), this protein is Somatotropin (gh).